Reading from the N-terminus, the 224-residue chain is Ribose-5-phosphate isomerase A (224 aa).

Substrate is bound by residues 26–29 (TGST), 82–85 (DGAD), and 95–98 (KGGG). The active-site Proton acceptor is Glu-104. Lys-122 contributes to the substrate binding site.

It belongs to the ribose 5-phosphate isomerase family. Homodimer.

The catalysed reaction is aldehydo-D-ribose 5-phosphate = D-ribulose 5-phosphate. It participates in carbohydrate degradation; pentose phosphate pathway; D-ribose 5-phosphate from D-ribulose 5-phosphate (non-oxidative stage): step 1/1. In terms of biological role, catalyzes the reversible conversion of ribose-5-phosphate to ribulose 5-phosphate. The protein is Ribose-5-phosphate isomerase A of Lactococcus lactis subsp. cremoris (strain MG1363).